Reading from the N-terminus, the 525-residue chain is GMP synthase [glutamine-hydrolyzing] (525 aa).

One can recognise a Glutamine amidotransferase type-1 domain in the interval 9–207; that stretch reads RILILDFGSQ…VRDICQCEAL (199 aa). Cysteine 86 (nucleophile) is an active-site residue. Residues histidine 181 and glutamate 183 contribute to the active site. The GMPS ATP-PPase domain maps to 208 to 400; the sequence is WTPAKIIDDA…LGLPYDMLYR (193 aa). 235–241 lines the ATP pocket; that stretch reads SGGVDSS.

In terms of assembly, homodimer.

The enzyme catalyses XMP + L-glutamine + ATP + H2O = GMP + L-glutamate + AMP + diphosphate + 2 H(+). It functions in the pathway purine metabolism; GMP biosynthesis; GMP from XMP (L-Gln route): step 1/1. Catalyzes the synthesis of GMP from XMP. The chain is GMP synthase [glutamine-hydrolyzing] from Salmonella paratyphi B (strain ATCC BAA-1250 / SPB7).